A 155-amino-acid polypeptide reads, in one-letter code: Nodulin-related protein 2 (155 aa).

N-acetylmethionine is present on Met-1. 2 disordered regions span residues 1 to 37 (MNFISDQVKKLSSSTPEEPDHNKPVEGTETATRPATN) and 85 to 155 (DEKS…GFLK). A compositionally biased stretch (basic and acidic residues) spans 95–106 (DKAEKYLNDYES). Residues 120 to 130 (SQAEPASQPEP) are compositionally biased toward low complexity.

In terms of assembly, interacts with DEK3.

In terms of biological role, may be a negative regulator of the ABA signaling/synthesis pathway. This Arabidopsis thaliana (Mouse-ear cress) protein is Nodulin-related protein 2.